The primary structure comprises 102 residues: Large ribosomal subunit protein bL21 (102 aa).

This sequence belongs to the bacterial ribosomal protein bL21 family. As to quaternary structure, part of the 50S ribosomal subunit. Contacts protein L20.

Functionally, this protein binds to 23S rRNA in the presence of protein L20. The polypeptide is Large ribosomal subunit protein bL21 (Nitratiruptor sp. (strain SB155-2)).